Here is a 254-residue protein sequence, read N- to C-terminus: Nickel import ATP-binding protein NikD (254 aa).

The 240-residue stretch at 2–241 folds into the ABC transporter domain; it reads PQQIELRNIA…PKHAVTRSLV (240 aa). Residue 36–43 coordinates ATP; it reads GGSGSGKS.

It belongs to the ABC transporter superfamily. Nickel importer (TC 3.A.1.5.3) family. The complex is composed of two ATP-binding proteins (NikD and NikE), two transmembrane proteins (NikB and NikC) and a solute-binding protein (NikA).

Its subcellular location is the cell inner membrane. It catalyses the reaction Ni(2+)(out) + ATP + H2O = Ni(2+)(in) + ADP + phosphate + H(+). Part of the ABC transporter complex NikABCDE involved in nickel import. Responsible for energy coupling to the transport system. This is Nickel import ATP-binding protein NikD from Escherichia coli (strain UTI89 / UPEC).